A 327-amino-acid chain; its full sequence is Annexin A8 (327 aa).

Annexin repeat units follow at residues 21 to 92 (FNPV…ALMY), 93 to 164 (PPYR…CLLQ), 177 to 249 (GLAL…TIVK), and 253 to 324 (NLHC…SLVG). Residues M266, G268, G270, and D310 each contribute to the Ca(2+) site.

This sequence belongs to the annexin family.

Functionally, this protein is an anticoagulant protein that acts as an indirect inhibitor of the thromboplastin-specific complex, which is involved in the blood coagulation cascade. This chain is Annexin A8 (ANXA8), found in Oryctolagus cuniculus (Rabbit).